The sequence spans 110 residues: MDKKDLFDVFDGFSQNLMETLAEAEALKKQVQDLVEQNASLRLENDKLRDRLSHFSQMEESDPSSKAISSRKENLENIYEDGFHICTFFYGQRRENNEDCAFCMELLYRE.

4 residues coordinate Zn(2+): His84, Cys86, Cys100, and Cys103.

It belongs to the YabA family. In terms of assembly, homotetramer. Interacts with both DnaA and DnaN, acting as a bridge between these two proteins. Zn(2+) serves as cofactor.

Its subcellular location is the cytoplasm. The protein localises to the nucleoid. Functionally, involved in control of chromosome replication initiation. Inhibits the cooperative binding of DnaA to the oriC region, thus negatively regulating initiation of chromosome replication. Inhibits the ability of DnaA-ATP to form a helix on DNA; does not disassemble preformed DnaA-DNA helices. Decreases the residence time of DnaA on the chromosome at its binding sites (oriC, replication forks and promoter-binding sites). Tethers DnaA to the replication machinery via the DNA polymerase beta sliding clamp subunit (dnaN). Associates with oriC and other DnaA targets on the chromosome in a DnaA-dependent manner. In Streptococcus mutans serotype c (strain ATCC 700610 / UA159), this protein is Replication initiation control protein YabA.